The sequence spans 445 residues: O-fucosyltransferase 23 (445 aa).

Residues Ile12–Leu34 form a helical; Signal-anchor for type II membrane protein membrane-spanning segment. N-linked (GlcNAc...) asparagine glycosylation is found at Asn97 and Asn179. His258–Arg260 contacts substrate. Asn294 carries an N-linked (GlcNAc...) asparagine glycan. Thr374–Phe375 provides a ligand contact to substrate. Asn424 carries N-linked (GlcNAc...) asparagine glycosylation.

It belongs to the glycosyltransferase GT106 family. In terms of tissue distribution, expressed in dry pollen grains and germinating pollen grains.

The protein resides in the golgi apparatus membrane. It functions in the pathway glycan metabolism. Its function is as follows. Probable protein O-fucosyltransferase required for correct pollen tube penetration through the stigma-style interface. May be involved in protein O-glycosylation events during pollen-pistil interactions. The protein is O-fucosyltransferase 23 of Arabidopsis thaliana (Mouse-ear cress).